The sequence spans 258 residues: MYTTGLIGKNINYSESPEIHNNYYKKNNIPFFYKIFNLNQDQIDYFIKNLHKNNIKGFNVTIPYKETILQYLNDIVYPADKIGAVNTVVVQEDKLIGYNTDYIGFIKSLQYYNIQVKNFKCLIIGSGGSAKCIYYALKELNAGDICIVSRNPEKARLKFEKKVKILNIKDENKLDRYDLIVNCTPIGGPNFREQKPVKLKEVKKNCVVYDLNYTPKRSKLLKEAKENGAFIINGEKMLIFQAYSAIGLWCLNGIKGGR.

Shikimate is bound by residues 14 to 16 (SES) and threonine 61. The active-site Proton acceptor is lysine 65. 2 residues coordinate shikimate: asparagine 86 and aspartate 101. NADP(+) contacts are provided by residues 125 to 129 (GSGGS) and leucine 211. Residue tyrosine 213 coordinates shikimate. Residue glycine 234 participates in NADP(+) binding.

It belongs to the shikimate dehydrogenase family. Homodimer.

It carries out the reaction shikimate + NADP(+) = 3-dehydroshikimate + NADPH + H(+). Its pathway is metabolic intermediate biosynthesis; chorismate biosynthesis; chorismate from D-erythrose 4-phosphate and phosphoenolpyruvate: step 4/7. Its function is as follows. Involved in the biosynthesis of the chorismate, which leads to the biosynthesis of aromatic amino acids. Catalyzes the reversible NADPH linked reduction of 3-dehydroshikimate (DHSA) to yield shikimate (SA). This is Shikimate dehydrogenase (NADP(+)) from Clostridium botulinum (strain Loch Maree / Type A3).